The primary structure comprises 331 residues: Nucleotide sugar transporter SLC35B4 (331 aa).

11 consecutive transmembrane segments (helical) span residues 4 to 24 (ALAV…LELL), 30 to 50 (GCGN…GFLF), 59 to 79 (PAIP…VSVV), 92 to 112 (LHMI…IIIL), 117 to 137 (SIFK…CTFM), 153 to 173 (GFQA…ALLM), 201 to 221 (ALPL…AVLF), 229 to 249 (IPVI…NIIT), 251 to 267 (YVCI…CASL), 268 to 288 (TVTL…ILYF), and 291 to 311 (PFTL…LMYT). The Mediates endoplasmic reticulum retention motif lies at 326 to 331 (KDSKKN).

It belongs to the nucleotide-sugar transporter family. SLC35B subfamily.

Its subcellular location is the endoplasmic reticulum membrane. It carries out the reaction UDP-N-acetyl-alpha-D-glucosamine(in) + UDP-alpha-D-glucuronate(out) = UDP-N-acetyl-alpha-D-glucosamine(out) + UDP-alpha-D-glucuronate(in). It catalyses the reaction UDP-alpha-D-xylose(in) + UDP-alpha-D-glucuronate(out) = UDP-alpha-D-xylose(out) + UDP-alpha-D-glucuronate(in). Its function is as follows. Antiporter that transports nucleotide sugars across the endoplasmic reticulum (ER) membrane in exchange for another nucleotide sugar. May couple UDP-alpha-D-glucuronate (UDP-GlcA) or UDP-alpha-D-xylose (UDP-Xyl) efflux to UDP-alpha-D-glucuronate (UDP-GlcA) influx into the ER lumen, which in turn stimulates glucuronidation and excretion of endobiotics and xenobiotics. This Pongo abelii (Sumatran orangutan) protein is Nucleotide sugar transporter SLC35B4 (SLC35B4).